Here is a 242-residue protein sequence, read N- to C-terminus: Probable transcriptional regulatory protein BamMC406_2210 (242 aa).

This sequence belongs to the TACO1 family.

It is found in the cytoplasm. The sequence is that of Probable transcriptional regulatory protein BamMC406_2210 from Burkholderia ambifaria (strain MC40-6).